The following is a 52-amino-acid chain: Movement protein TGBp3 (52 aa).

Topologically, residues 1–3 are lumenal; that stretch reads MHE. Residues 4 to 21 form a helical membrane-spanning segment; that stretch reads SHLVVILALLLLALWCLS. Residues 22-52 lie on the Cytoplasmic side of the membrane; it reads TRPVQPSCHVEINGHSIIVTGNCWHSTQRPH.

This sequence belongs to the Tymovirales TGBp3 protein family.

The protein resides in the host endoplasmic reticulum membrane. Its function is as follows. Plays a role in viral cell-to-cell propagation, by facilitating genome transport to neighboring plant cells through plasmosdesmata. May induce the formation of granular vesicles derived from the Endoplasmic reticulum, which align on actin filaments. The chain is Movement protein TGBp3 from Foxtail mosaic virus.